The sequence spans 685 residues: Sodium-dependent phosphate transporter 1-A (685 aa).

Transmembrane regions (helical) follow at residues Ile-21 to Phe-41, Ala-66 to Ser-86, Leu-106 to Phe-126, Ile-162 to Leu-182, Ala-207 to Phe-227, and Gly-234 to Val-254. Disordered regions lie at residues Arg-438–Asp-458 and Glu-483–Asp-513. The segment covering Glu-483–Glu-496 has biased composition (acidic residues). Residues Thr-497–Asp-513 show a composition bias toward basic and acidic residues. Helical transmembrane passes span Val-517–Gly-537, Ala-565–Trp-585, Phe-606–Ile-626, and Ile-656–Ala-676.

Belongs to the inorganic phosphate transporter (PiT) (TC 2.A.20) family.

It localises to the membrane. Functionally, sodium-phosphate symporter which plays a fundamental housekeeping role in phosphate transport. This is Sodium-dependent phosphate transporter 1-A (slc20a1-a) from Xenopus laevis (African clawed frog).